A 570-amino-acid polypeptide reads, in one-letter code: Interleukin-1 receptor accessory protein (570 aa).

A signal peptide spans 1–20 (MGLLWYLMSLSFYGILQSHA). Ig-like C2-type domains are found at residues 21–128 (SERC…VAFP), 139–230 (NSAM…RTVT), and 243–348 (PQIY…AKVK). At 21–367 (SERCDDWGLD…VELACGFGAT (347 aa)) the chain is on the extracellular side. Disulfide bonds link C24–C122, C47–C114, C137–C181, C160–C212, and C266–C332. An N-linked (GlcNAc...) asparagine glycan is attached at N57. Residues 69-85 (IWYWTRQDRDLEEPINF) form an essential for interaction with PTPRD region. Residues N107, N111, and N118 are each glycosylated (N-linked (GlcNAc...) asparagine). N196, N209, and N299 each carry an N-linked (GlcNAc...) asparagine glycan. A helical transmembrane segment spans residues 368–388 (VFLVVVLIVVYHVYWLEMVLF). The Cytoplasmic portion of the chain corresponds to 389 to 570 (YRAHFGTDET…GLSYSSLKNV (182 aa)). Positions 403–546 (KEYDIYVSYA…RFWKQLQVAM (144 aa)) constitute a TIR domain. Residue E482 is part of the active site. The disordered stretch occupies residues 550 to 570 (KSPRWSSNDKQGLSYSSLKNV). Polar residues predominate over residues 553–570 (RWSSNDKQGLSYSSLKNV).

This sequence belongs to the interleukin-1 receptor family. As to quaternary structure, the interleukin-36 receptor complex is a heterodimer of IL1RL2 and IL1RAP; the association is inhibited by IL36RN. The interleukin-1 receptor complex is a heterodimer of IL1R1 and IL1RAP. Associates with IL1R2 to form a non-signaling interleukin-1 receptor complex. Interacts with IL-33-bound IL1RL1 to form the minimal interleukin-33 signaling complex with a 1:1:1 stoichiometry. Interacts with KIT (independently of stimulation with KITLG/SCF). A mast cell-specific KITLG/SCF-induced interleukin-33 signaling complex contains IL1RL1, IL1RAP, KIT and MYD88. Interacts (via the first immunoglobilin domain) with PTPRD (via the third immunoglobilin domain); induces pre- and postsynaptic differentiation of neurons. As to expression, detected in lung, brain, spleen, thymus and liver. Expressed in brain endothelial cells, astrocytes, microglia and neurons. Isoform 3 is predominantly expressed in brain; expressed in hippocampal neurons.

It is found in the cell membrane. The protein localises to the secreted. The catalysed reaction is NAD(+) + H2O = ADP-D-ribose + nicotinamide + H(+). In terms of biological role, coreceptor for IL1RL2 in the IL-36 signaling system. Coreceptor with IL1R1 in the IL-1 signaling system. Associates with IL1R1 bound to IL1B to form the high affinity interleukin-1 receptor complex which mediates interleukin-1-dependent activation of NF-kappa-B and other pathways. Signaling involves the recruitment of adapter molecules such as TOLLIP, MYD88, and IRAK1 or IRAK2 via the respective TIR domains of the receptor/coreceptor subunits. Recruits TOLLIP to the signaling complex. Does not bind to interleukin-1 alone; binding of IL1RN to IL1R1, prevents its association with IL1R1 to form a signaling complex. The cellular response is modulated through a non-signaling association with the membrane IL1R2 decoy receptor. Secreted forms (isoforms 2 and 3) associate with secreted ligand-bound IL1R2 and increase the affinity of secreted IL1R2 for IL1B; this complex formation may be the dominant mechanism for neutralization of IL1B by secreted/soluble receptors. Coreceptor for IL1RL1 in the IL-33 signaling system. Can bidirectionally induce pre- and postsynaptic differentiation of neurons by trans-synaptically binding to PTPRD. May play a role in IL1B-mediated costimulation of IFNG production from T-helper 1 (Th1) cells. Associates with secreted ligand-bound IL1R2 and increases the affinity of secreted IL1R2 for IL1B; this complex formation may be the dominant mechanism for neutralization of IL1B by secreted/soluble receptors. Enhances the ability of secreted IL1R1 to inhibit IL-33 signaling. Functionally, required for Src phosphorylation by IL1B. Required for IL1B-potentiated NMDA-induced calcium influx in neurons acting in cooperation with IL1R1 isoform 2 to mediate Akt kinase activation. This chain is Interleukin-1 receptor accessory protein (Il1rap), found in Mus musculus (Mouse).